A 421-amino-acid chain; its full sequence is Gamma-glutamyl phosphate reductase (421 aa).

This sequence belongs to the gamma-glutamyl phosphate reductase family.

It localises to the cytoplasm. It catalyses the reaction L-glutamate 5-semialdehyde + phosphate + NADP(+) = L-glutamyl 5-phosphate + NADPH + H(+). It functions in the pathway amino-acid biosynthesis; L-proline biosynthesis; L-glutamate 5-semialdehyde from L-glutamate: step 2/2. Its function is as follows. Catalyzes the NADPH-dependent reduction of L-glutamate 5-phosphate into L-glutamate 5-semialdehyde and phosphate. The product spontaneously undergoes cyclization to form 1-pyrroline-5-carboxylate. The polypeptide is Gamma-glutamyl phosphate reductase (Leptospira biflexa serovar Patoc (strain Patoc 1 / ATCC 23582 / Paris)).